Consider the following 337-residue polypeptide: tRNA N6-adenosine threonylcarbamoyltransferase (337 aa).

Residues histidine 114 and histidine 118 each contribute to the Fe cation site. Residues 136-140 (LVSGG), aspartate 169, glycine 182, aspartate 186, and asparagine 275 contribute to the substrate site. Aspartate 301 contributes to the Fe cation binding site.

It belongs to the KAE1 / TsaD family. Fe(2+) serves as cofactor.

The protein resides in the cytoplasm. It catalyses the reaction L-threonylcarbamoyladenylate + adenosine(37) in tRNA = N(6)-L-threonylcarbamoyladenosine(37) in tRNA + AMP + H(+). Its function is as follows. Required for the formation of a threonylcarbamoyl group on adenosine at position 37 (t(6)A37) in tRNAs that read codons beginning with adenine. Is involved in the transfer of the threonylcarbamoyl moiety of threonylcarbamoyl-AMP (TC-AMP) to the N6 group of A37, together with TsaE and TsaB. TsaD likely plays a direct catalytic role in this reaction. The polypeptide is tRNA N6-adenosine threonylcarbamoyltransferase (Streptococcus thermophilus (strain CNRZ 1066)).